We begin with the raw amino-acid sequence, 124 residues long: MATVNQLVRKPRAPKVDKTNVPALNACPQKRGVCTRVYTTTPKKPNSALRKVARVRLTNGFEVTSYIGGEGHNLQEHSVILIRGGRVKDLPGVRYHTVRGALDCAGVNTRRQGRSKYGAKRPKS.

Asp-89 is subject to 3-methylthioaspartic acid.

It belongs to the universal ribosomal protein uS12 family. As to quaternary structure, part of the 30S ribosomal subunit. Contacts proteins S8 and S17. May interact with IF1 in the 30S initiation complex.

With S4 and S5 plays an important role in translational accuracy. In terms of biological role, interacts with and stabilizes bases of the 16S rRNA that are involved in tRNA selection in the A site and with the mRNA backbone. Located at the interface of the 30S and 50S subunits, it traverses the body of the 30S subunit contacting proteins on the other side and probably holding the rRNA structure together. The combined cluster of proteins S8, S12 and S17 appears to hold together the shoulder and platform of the 30S subunit. In Shewanella sp. (strain ANA-3), this protein is Small ribosomal subunit protein uS12.